The primary structure comprises 391 residues: Succinate--CoA ligase [ADP-forming] subunit beta (391 aa).

Residues K9–Q246 enclose the ATP-grasp domain. ATP contacts are provided by residues K46, G53–G55, E99, L102, and E107. N199 and D213 together coordinate Mg(2+). Residues N266 and G323–V325 contribute to the substrate site.

The protein belongs to the succinate/malate CoA ligase beta subunit family. Heterotetramer of two alpha and two beta subunits. Requires Mg(2+) as cofactor.

It catalyses the reaction succinate + ATP + CoA = succinyl-CoA + ADP + phosphate. The enzyme catalyses GTP + succinate + CoA = succinyl-CoA + GDP + phosphate. Its pathway is carbohydrate metabolism; tricarboxylic acid cycle; succinate from succinyl-CoA (ligase route): step 1/1. Functionally, succinyl-CoA synthetase functions in the citric acid cycle (TCA), coupling the hydrolysis of succinyl-CoA to the synthesis of either ATP or GTP and thus represents the only step of substrate-level phosphorylation in the TCA. The beta subunit provides nucleotide specificity of the enzyme and binds the substrate succinate, while the binding sites for coenzyme A and phosphate are found in the alpha subunit. The polypeptide is Succinate--CoA ligase [ADP-forming] subunit beta (Alkalilimnicola ehrlichii (strain ATCC BAA-1101 / DSM 17681 / MLHE-1)).